The primary structure comprises 315 residues: Glycine--tRNA ligase alpha subunit (315 aa).

This sequence belongs to the class-II aminoacyl-tRNA synthetase family. As to quaternary structure, tetramer of two alpha and two beta subunits.

The protein localises to the cytoplasm. It catalyses the reaction tRNA(Gly) + glycine + ATP = glycyl-tRNA(Gly) + AMP + diphosphate. This Ectopseudomonas mendocina (strain ymp) (Pseudomonas mendocina) protein is Glycine--tRNA ligase alpha subunit.